A 450-amino-acid chain; its full sequence is Bifunctional protein GlmU (450 aa).

Residues Met-1 to Arg-228 are pyrophosphorylase. Residues Leu-8–Gly-11, Lys-22, Gln-75, and Gly-80–Thr-81 each bind UDP-N-acetyl-alpha-D-glucosamine. Asp-105 is a Mg(2+) binding site. UDP-N-acetyl-alpha-D-glucosamine contacts are provided by Gly-140, Glu-154, Asn-169, and Asn-226. Asn-226 is a binding site for Mg(2+). The linker stretch occupies residues Thr-229 to Asn-249. Residues Gly-250–Ser-450 are N-acetyltransferase. UDP-N-acetyl-alpha-D-glucosamine is bound by residues Arg-315 and Lys-333. His-345 acts as the Proton acceptor in catalysis. UDP-N-acetyl-alpha-D-glucosamine is bound by residues Tyr-348 and Asn-359. Acetyl-CoA contacts are provided by residues Ala-362, Asn-368 to Tyr-369, Ser-387, Ser-405, and Arg-422.

It in the N-terminal section; belongs to the N-acetylglucosamine-1-phosphate uridyltransferase family. This sequence in the C-terminal section; belongs to the transferase hexapeptide repeat family. As to quaternary structure, homotrimer. Requires Mg(2+) as cofactor.

It localises to the cytoplasm. The catalysed reaction is alpha-D-glucosamine 1-phosphate + acetyl-CoA = N-acetyl-alpha-D-glucosamine 1-phosphate + CoA + H(+). It catalyses the reaction N-acetyl-alpha-D-glucosamine 1-phosphate + UTP + H(+) = UDP-N-acetyl-alpha-D-glucosamine + diphosphate. Its pathway is nucleotide-sugar biosynthesis; UDP-N-acetyl-alpha-D-glucosamine biosynthesis; N-acetyl-alpha-D-glucosamine 1-phosphate from alpha-D-glucosamine 6-phosphate (route II): step 2/2. It participates in nucleotide-sugar biosynthesis; UDP-N-acetyl-alpha-D-glucosamine biosynthesis; UDP-N-acetyl-alpha-D-glucosamine from N-acetyl-alpha-D-glucosamine 1-phosphate: step 1/1. The protein operates within bacterial outer membrane biogenesis; LPS lipid A biosynthesis. Functionally, catalyzes the last two sequential reactions in the de novo biosynthetic pathway for UDP-N-acetylglucosamine (UDP-GlcNAc). The C-terminal domain catalyzes the transfer of acetyl group from acetyl coenzyme A to glucosamine-1-phosphate (GlcN-1-P) to produce N-acetylglucosamine-1-phosphate (GlcNAc-1-P), which is converted into UDP-GlcNAc by the transfer of uridine 5-monophosphate (from uridine 5-triphosphate), a reaction catalyzed by the N-terminal domain. The polypeptide is Bifunctional protein GlmU (Roseobacter denitrificans (strain ATCC 33942 / OCh 114) (Erythrobacter sp. (strain OCh 114))).